A 306-amino-acid polypeptide reads, in one-letter code: MTSLPKVLFLMGPTASGKTALALDMAEHHNCEIISVDSALIYRGMDIGTAKPTASELARAPHKLIDILDPLESYSAADFRADAVREIEETLSRGKTPLLVGGTMMYFKTLLDGLSPLPSADDAVRAQIAAEVEARGWQALHDELRNIDPVSAERIHPNDPQRLSRAIEVYRISGKTLTELTKIKAESLPYHMVQFAIAPQDRTVLHGLIAKRFQQMLAEGFIGEVETLKARGDLHLELPSMRCVGYRQAWQYLDGEFDHATMVEKAVAATRQLAKRQLTWLRGWPELHWLASGDEGNLDKLVQQSR.

Residue 12–19 coordinates ATP; it reads GPTASGKT. 14–19 is a substrate binding site; it reads TASGKT. 3 interaction with substrate tRNA regions span residues 37–40, 161–165, and 242–247; these read DSAL, QRLSR, and RCVGYR.

Belongs to the IPP transferase family. In terms of assembly, monomer. Requires Mg(2+) as cofactor.

It carries out the reaction adenosine(37) in tRNA + dimethylallyl diphosphate = N(6)-dimethylallyladenosine(37) in tRNA + diphosphate. Catalyzes the transfer of a dimethylallyl group onto the adenine at position 37 in tRNAs that read codons beginning with uridine, leading to the formation of N6-(dimethylallyl)adenosine (i(6)A). This Shewanella amazonensis (strain ATCC BAA-1098 / SB2B) protein is tRNA dimethylallyltransferase.